Here is a 362-residue protein sequence, read N- to C-terminus: Molybdenum import ATP-binding protein ModC (362 aa).

Residues 2–236 (ASPIEVRLHM…LDLPLAMGGD (235 aa)) form the ABC transporter domain. Residue 34-41 (GPSGSGKT) participates in ATP binding. The Mop domain maps to 297–362 (QSSILNRLPV…AQIKAVAVLA (66 aa)).

It belongs to the ABC transporter superfamily. Molybdate importer (TC 3.A.1.8) family. The complex is composed of two ATP-binding proteins (ModC), two transmembrane proteins (ModB) and a solute-binding protein (ModA).

It localises to the cell inner membrane. It catalyses the reaction molybdate(out) + ATP + H2O = molybdate(in) + ADP + phosphate + H(+). Part of the ABC transporter complex ModABC involved in molybdenum import. Responsible for energy coupling to the transport system. In Pseudomonas savastanoi pv. phaseolicola (strain 1448A / Race 6) (Pseudomonas syringae pv. phaseolicola (strain 1448A / Race 6)), this protein is Molybdenum import ATP-binding protein ModC.